A 202-amino-acid polypeptide reads, in one-letter code: Peptidyl-tRNA hydrolase (202 aa).

Tyr-16 contacts tRNA. His-21 serves as the catalytic Proton acceptor. Residues Tyr-68, Asn-70, and Asn-116 each contribute to the tRNA site.

Belongs to the PTH family. As to quaternary structure, monomer.

It localises to the cytoplasm. It carries out the reaction an N-acyl-L-alpha-aminoacyl-tRNA + H2O = an N-acyl-L-amino acid + a tRNA + H(+). Hydrolyzes ribosome-free peptidyl-tRNAs (with 1 or more amino acids incorporated), which drop off the ribosome during protein synthesis, or as a result of ribosome stalling. Functionally, catalyzes the release of premature peptidyl moieties from peptidyl-tRNA molecules trapped in stalled 50S ribosomal subunits, and thus maintains levels of free tRNAs and 50S ribosomes. The protein is Peptidyl-tRNA hydrolase of Treponema pallidum (strain Nichols).